The chain runs to 517 residues: Maturase K (517 aa).

It belongs to the intron maturase 2 family. MatK subfamily.

Its subcellular location is the plastid. The protein resides in the chloroplast. In terms of biological role, usually encoded in the trnK tRNA gene intron. Probably assists in splicing its own and other chloroplast group II introns. This Acer pseudoplatanus (Sycamore maple) protein is Maturase K.